The primary structure comprises 80 residues: Small ribosomal subunit protein bS18 (80 aa).

The protein belongs to the bacterial ribosomal protein bS18 family. As to quaternary structure, part of the 30S ribosomal subunit. Forms a tight heterodimer with protein bS6.

In terms of biological role, binds as a heterodimer with protein bS6 to the central domain of the 16S rRNA, where it helps stabilize the platform of the 30S subunit. In Staphylococcus aureus (strain Mu3 / ATCC 700698), this protein is Small ribosomal subunit protein bS18.